The sequence spans 812 residues: Lon protease (812 aa).

The Lon N-terminal domain occupies 11–204 (IPVLPLRDVV…YLMAMMESEI (194 aa)). 356-363 (GPPGVGKT) is an ATP binding site. The 182-residue stretch at 592 to 773 (ENRVGQVTGL…EEEQTLSLQN (182 aa)) folds into the Lon proteolytic domain. Active-site residues include serine 679 and lysine 722. Residues 745-764 (KENPDNAKADQDRHPVKNNE) show a composition bias toward basic and acidic residues. The tract at residues 745–766 (KENPDNAKADQDRHPVKNNEEE) is disordered.

It belongs to the peptidase S16 family. As to quaternary structure, homohexamer. Organized in a ring with a central cavity. ATP binding and hydrolysis do not affect the oligomeric state of the enzyme.

The protein resides in the cytoplasm. The enzyme catalyses Hydrolysis of proteins in presence of ATP.. Contains an allosteric site (distinct from its active site), whose occupancy by an unfolded polypeptide leads to enzyme activation. In terms of biological role, ATP-dependent serine protease that mediates the selective degradation of mutant and abnormal proteins as well as certain short-lived regulatory proteins. Required for cellular homeostasis and for survival from DNA damage and developmental changes induced by stress. Degrades polypeptides processively to yield small peptide fragments that are 5 to 10 amino acids long. Binds to DNA in a double-stranded, site-specific manner. Endogenous substrates include the regulatory proteins RcsA and SulA, the transcriptional activator SoxS, and UmuD. Its overproduction specifically inhibits translation through at least two different pathways, one of them being the YoeB-YefM toxin-antitoxin system. The chain is Lon protease from Shigella dysenteriae serotype 1 (strain Sd197).